Here is a 375-residue protein sequence, read N- to C-terminus: Chaperone protein DnaJ (375 aa).

In terms of domain architecture, J spans 5–69 (DYYEVLGVSK…QKRAQYDQFG (65 aa)). Residues 132 to 214 (GKETIIEIPR…CGGTGKVKKR (83 aa)) form a CR-type zinc finger. The Zn(2+) site is built by Cys-145, Cys-148, Cys-162, Cys-165, Cys-188, Cys-191, Cys-202, and Cys-205. 4 CXXCXGXG motif repeats span residues 145-152 (CETCKGSG), 162-169 (CSHCGGSG), 188-195 (CHHCEGTG), and 202-209 (CSDCGGTG).

Belongs to the DnaJ family. In terms of assembly, homodimer. Zn(2+) serves as cofactor.

It localises to the cytoplasm. Its function is as follows. Participates actively in the response to hyperosmotic and heat shock by preventing the aggregation of stress-denatured proteins and by disaggregating proteins, also in an autonomous, DnaK-independent fashion. Unfolded proteins bind initially to DnaJ; upon interaction with the DnaJ-bound protein, DnaK hydrolyzes its bound ATP, resulting in the formation of a stable complex. GrpE releases ADP from DnaK; ATP binding to DnaK triggers the release of the substrate protein, thus completing the reaction cycle. Several rounds of ATP-dependent interactions between DnaJ, DnaK and GrpE are required for fully efficient folding. Also involved, together with DnaK and GrpE, in the DNA replication of plasmids through activation of initiation proteins. The protein is Chaperone protein DnaJ of Bacillus velezensis (strain DSM 23117 / BGSC 10A6 / LMG 26770 / FZB42) (Bacillus amyloliquefaciens subsp. plantarum).